The chain runs to 522 residues: Mediator of RNA polymerase II transcription subunit 1.2 (522 aa).

The stretch at 13-40 forms a coiled coil; that stretch reads LLEQRKNQELNIEHIDEEMRLEQVRQAA.

It belongs to the Mediator complex subunit 1 family. As to quaternary structure, component of the Mediator complex.

It is found in the nucleus. Component of the Mediator complex, a coactivator involved in the regulated transcription of nearly all RNA polymerase II-dependent genes. Mediator functions as a bridge to convey information from gene-specific regulatory proteins to the basal RNA polymerase II transcription machinery. Mediator is recruited to promoters by direct interactions with regulatory proteins and serves as a scaffold for the assembly of a functional preinitiation complex with RNA polymerase II and the general transcription factors. The chain is Mediator of RNA polymerase II transcription subunit 1.2 (mdt-1.2) from Caenorhabditis elegans.